Here is a 629-residue protein sequence, read N- to C-terminus: Bifunctional protein ArgHA (629 aa).

An argininosuccinate lyase region spans residues 1 to 499 (MALWGGRFSQ…NLPRSRSDLV (499 aa)). Residues 464 to 598 (ISIRAARLTD…EKVLKDCDMC (135 aa)) form the N-acetyltransferase domain. An amino-acid acetyltransferase region spans residues 500 to 629 (KAVGTFAVTE…INLKAEKLAS (130 aa)).

In the N-terminal section; belongs to the lyase 1 family. Argininosuccinate lyase subfamily. The protein in the C-terminal section; belongs to the acetyltransferase family. ArgA subfamily.

It localises to the cytoplasm. It carries out the reaction 2-(N(omega)-L-arginino)succinate = fumarate + L-arginine. It catalyses the reaction L-glutamate + acetyl-CoA = N-acetyl-L-glutamate + CoA + H(+). It functions in the pathway amino-acid biosynthesis; L-arginine biosynthesis; N(2)-acetyl-L-ornithine from L-glutamate: step 1/4. Its pathway is amino-acid biosynthesis; L-arginine biosynthesis; L-arginine from L-ornithine and carbamoyl phosphate: step 3/3. The protein is Bifunctional protein ArgHA (argHA) of Moritella abyssi.